A 195-amino-acid chain; its full sequence is Putative NADH dehydrogenase/NAD(P)H nitroreductase RSc1004 (195 aa).

The protein belongs to the nitroreductase family. HadB/RutE subfamily. FMN serves as cofactor.

This Ralstonia nicotianae (strain ATCC BAA-1114 / GMI1000) (Ralstonia solanacearum) protein is Putative NADH dehydrogenase/NAD(P)H nitroreductase RSc1004.